The chain runs to 94 residues: Co-chaperonin GroES (94 aa).

The protein belongs to the GroES chaperonin family. Heptamer of 7 subunits arranged in a ring. Interacts with the chaperonin GroEL.

The protein resides in the cytoplasm. Functionally, together with the chaperonin GroEL, plays an essential role in assisting protein folding. The GroEL-GroES system forms a nano-cage that allows encapsulation of the non-native substrate proteins and provides a physical environment optimized to promote and accelerate protein folding. GroES binds to the apical surface of the GroEL ring, thereby capping the opening of the GroEL channel. This Bacillus licheniformis (strain ATCC 14580 / DSM 13 / JCM 2505 / CCUG 7422 / NBRC 12200 / NCIMB 9375 / NCTC 10341 / NRRL NRS-1264 / Gibson 46) protein is Co-chaperonin GroES.